Consider the following 66-residue polypeptide: Phylloseptin-Az2 (66 aa).

Residues M1 to C22 form the signal peptide. The propeptide occupies E23–E44. The interval E24–K45 is disordered. The segment covering E31–K41 has biased composition (acidic residues). F65 carries the phenylalanine amide modification.

Expressed by the skin glands.

The protein resides in the secreted. Has antibacterial activity against the Gram-negative bacteria E.coli ATCC 11775 (MIC=7.2 uM), and the Gram-positive bacteria S.aureus ATCC 12600 (MIC=3.6 uM) and M.luteus ATCC 49732 (MIC=1.8 uM). Does not inhibit the growth of the fungus C.albicans. This is Phylloseptin-Az2 from Pithecopus azureus (Orange-legged monkey tree frog).